A 78-amino-acid chain; its full sequence is Large ribosomal subunit protein bL28 (78 aa).

Positions 1 to 24 (MSQVCQVTGKRPVTGNNVSHSQRK) are disordered.

This sequence belongs to the bacterial ribosomal protein bL28 family.

This chain is Large ribosomal subunit protein bL28, found in Chromohalobacter salexigens (strain ATCC BAA-138 / DSM 3043 / CIP 106854 / NCIMB 13768 / 1H11).